A 147-amino-acid chain; its full sequence is CYFQNCPRGXXXAMSDLELRQCLPCGPGGKGRCFGPSICCGDELGCFVGTAEALRCQEEIYLPSPCQSGQKPCGSGGRCAAAGICCNDESCVTEPECREGIGFPRRVXASDRSNATLLDGPSGALLLRLVQLAAAPEPAEPAQPGVY.

Cysteines 1 and 6 form a disulfide. Glycine 9 is subject to Glycine amide. 7 disulfides stabilise this stretch: cysteine 22-cysteine 66, cysteine 25-cysteine 39, cysteine 33-cysteine 56, cysteine 40-cysteine 46, cysteine 73-cysteine 85, cysteine 79-cysteine 97, and cysteine 86-cysteine 91. A glycan (N-linked (GlcNAc...) asparagine) is linked at asparagine 114.

Belongs to the vasopressin/oxytocin family. As to quaternary structure, interacts with vasopressin receptors V1bR/AVPR1B (Ki=85 pM), V1aR/AVPR1A (Ki=0.6 nM) and V2R/AVPR2 (Ki=4.9 nM). Interacts with oxytocin receptor (OXTR) (Ki=110 nM).

The protein resides in the secreted. Functionally, neurophysin 2 specifically binds vasopressin. Vasopressin has a direct antidiuretic action on the kidney, it also causes vasoconstriction of the peripheral vessels. Acts by binding to vasopressin receptors (V1bR/AVPR1B, V1aR/AVPR1A, and V2R/AVPR2). The polypeptide is Vasopressin-neurophysin 2-copeptin (AVP) (Ovis aries (Sheep)).